We begin with the raw amino-acid sequence, 858 residues long: Volume-regulated anion channel subunit LRRC8D (858 aa).

Residues 1–22 (MFTLAEVASLNDIQPTYRILKP) are Cytoplasmic-facing. Residues 23–48 (WWDVFMDYLAVVMLMVAIFAGTMQLT) form a helical membrane-spanning segment. The Extracellular segment spans residues 49-163 (KDQVVCLPVL…YHLALPWYSK (115 aa)). Cys54 and Cys354 are joined by a disulfide. The segment at 118-137 (AESTFPSQETKKEKRDPTGR) is disordered. The span at 126–137 (ETKKEKRDPTGR) shows a compositional bias: basic and acidic residues. A helical membrane pass occupies residues 164 to 182 (YFPYLALIHTIILMVSSNF). Topologically, residues 183–308 (WFKYPKTCSK…EDSDLIYKLY (126 aa)) are cytoplasmic. Positions 221-251 (SEENKQRITGAQTLPKHVSTSSDEGSPSAST) are disordered. Positions 227–251 (RITGAQTLPKHVSTSSDEGSPSAST) are enriched in polar residues. Ser241, Ser242, and Ser246 each carry phosphoserine. The chain crosses the membrane as a helical span at residues 309-330 (VVQTLIKTAKFIFILCYTANFV). Residues 331–360 (NAISFEHVCKPKVEHLTGYEVFECTHNMAY) are Extracellular-facing. The helical transmembrane segment at 361-386 (MLKKLLISYISIICVYGFICLYTLFW) threads the bilayer. The Cytoplasmic segment spans residues 387–858 (LFRIPLKEYS…DVNVPFANGI (472 aa)). LRR repeat units lie at residues 514 to 534 (NLQELHLCHCPAKVEQTAFSF), 538 to 559 (HLRCLHVKFTDVAEIPAWVYLL), 561 to 582 (NLRELYLIGNLNSENNKMIGLE), 589 to 609 (HLKILHVKSNLTKVPSNITDV), 612 to 632 (HLTKLVIHNDGTKLLVLNSLK), 636 to 657 (NVAELELQNCELERIPHAIFSL), 659 to 680 (NLQELDLKSNSIRTIEEIISFQ), 684 to 705 (RLTCLKLWHNKIVAIPPSITHV), 707 to 728 (NLESLYFSNNKLESLPVAVFSL), 730 to 751 (KLRCLDVSYNNISTIPIEIGLL), 753 to 774 (NLQHLHITGNKVDVLPKQLFKC), 776 to 797 (KLRTLNLGQNCIASLPEKISQL), and 799 to 820 (QLTQLELKGNCLDRLPAQLGQC).

Belongs to the LRRC8 family. Heterohexamer; oligomerizes with other LRRC8 proteins (LRRC8A, LRRC8B, LRRC8C and/or LRRC8E) to form a heterohexamer. In vivo, the subunit composition may depend primarily on expression levels, and heterooligomeric channels containing various proportions of the different LRRC8 proteins may coexist.

It is found in the cell membrane. It localises to the endoplasmic reticulum membrane. The catalysed reaction is chloride(in) = chloride(out). The enzyme catalyses iodide(out) = iodide(in). It catalyses the reaction taurine(out) = taurine(in). Non-essential component of the volume-regulated anion channel (VRAC, also named VSOAC channel), an anion channel required to maintain a constant cell volume in response to extracellular or intracellular osmotic changes. The VRAC channel conducts iodide better than chloride and can also conduct organic osmolytes like taurine. Plays a redundant role in the efflux of amino acids, such as aspartate, in response to osmotic stress. Channel activity requires LRRC8A plus at least one other family member (LRRC8B, LRRC8C, LRRC8D or LRRC8E); channel characteristics depend on the precise subunit composition. Also acts as a regulator of glucose-sensing in pancreatic beta cells: VRAC currents, generated in response to hypotonicity- or glucose-induced beta cell swelling, depolarize cells, thereby causing electrical excitation, leading to increase glucose sensitivity and insulin secretion. VRAC channels containing LRRC8D inhibit transport of immunoreactive cyclic dinucleotide GMP-AMP (2'-3'-cGAMP), an immune messenger produced in response to DNA virus in the cytosol. The polypeptide is Volume-regulated anion channel subunit LRRC8D (Rattus norvegicus (Rat)).